A 436-amino-acid polypeptide reads, in one-letter code: Trigger factor (436 aa).

2 disordered regions span residues 1 to 26 and 81 to 100; these read MQVS…RVEN and QESL…TGEG. The PPIase FKBP-type domain occupies 161–246; the sequence is EDRVVIDFHG…VKRVEEPQLP (86 aa).

It belongs to the FKBP-type PPIase family. Tig subfamily.

The protein localises to the cytoplasm. It carries out the reaction [protein]-peptidylproline (omega=180) = [protein]-peptidylproline (omega=0). Involved in protein export. Acts as a chaperone by maintaining the newly synthesized protein in an open conformation. Functions as a peptidyl-prolyl cis-trans isomerase. This Halorhodospira halophila (strain DSM 244 / SL1) (Ectothiorhodospira halophila (strain DSM 244 / SL1)) protein is Trigger factor.